A 394-amino-acid polypeptide reads, in one-letter code: Acetyl-CoA acetyltransferase (394 aa).

Cys89 functions as the Acyl-thioester intermediate in the catalytic mechanism. Active-site proton acceptor residues include His350 and Cys380.

It belongs to the thiolase-like superfamily. Thiolase family. Homotetramer.

The protein resides in the cytoplasm. It catalyses the reaction 2 acetyl-CoA = acetoacetyl-CoA + CoA. It participates in biopolymer metabolism; poly-(R)-3-hydroxybutanoate biosynthesis. It functions in the pathway metabolic intermediate biosynthesis; (R)-mevalonate biosynthesis; (R)-mevalonate from acetyl-CoA: step 1/3. This is Acetyl-CoA acetyltransferase from Thiocystis violacea.